A 111-amino-acid chain; its full sequence is Phosphoribosyl-ATP pyrophosphatase (111 aa).

This sequence belongs to the PRA-PH family.

Its subcellular location is the cytoplasm. The enzyme catalyses 1-(5-phospho-beta-D-ribosyl)-ATP + H2O = 1-(5-phospho-beta-D-ribosyl)-5'-AMP + diphosphate + H(+). Its pathway is amino-acid biosynthesis; L-histidine biosynthesis; L-histidine from 5-phospho-alpha-D-ribose 1-diphosphate: step 2/9. The polypeptide is Phosphoribosyl-ATP pyrophosphatase (hisE) (Azospirillum brasilense).